The chain runs to 202 residues: Coiled-coil domain-containing protein 69 (202 aa).

Over residues 1-11 the composition is skewed to basic residues; the sequence is MGCRQSRHSRG. 2 disordered regions span residues 1 to 20 and 32 to 52; these read MGCRQSRHSRGKRAEKVEET and GRILEGRHEEAGQVPQTSNAQ. The N-myristoyl glycine moiety is linked to residue glycine 2. Positions 32 to 42 are enriched in basic and acidic residues; that stretch reads GRILEGRHEEA. Serine 92 is modified (phosphoserine). The stretch at 112–146 forms a coiled coil; the sequence is WEQELESLHHVIEMKNERIHELEKQLFLLEMLKEK.

The protein belongs to the CCDC69 family.

The protein localises to the cytoplasm. The protein resides in the cytoskeleton. Its subcellular location is the spindle. It is found in the midbody. Functionally, may act as a scaffold to regulate the recruitment and assembly of spindle midzone components. Required for the localization of AURKB and PLK1 to the spindle midzone. The chain is Coiled-coil domain-containing protein 69 (Ccdc69) from Mus musculus (Mouse).